The sequence spans 854 residues: Discoidin domain-containing receptor 2 (854 aa).

The first 21 residues, 1–21, serve as a signal peptide directing secretion; that stretch reads MIPIPRMPLVLLLLLLILGSA. The Extracellular portion of the chain corresponds to 22–399; it reads KAQVNPAICR…MLKVDDSNTR (378 aa). The F5/8 type C domain maps to 30-185; that stretch reads CRYPLGMSGG…VCMRVELYGC (156 aa). 2 cysteine pairs are disulfide-bonded: Cys30–Cys185 and Cys73–Cys177. N-linked (GlcNAc...) asparagine glycosylation is found at Asn121, Asn213, Asn261, Asn280, and Asn372. A helical membrane pass occupies residues 400–421; that stretch reads ILIGCLVAIIFILLAIIVIILW. The Cytoplasmic portion of the chain corresponds to 422-854; sequence RQFWQKMLEK…HLLLLQQGAE (433 aa). Positions 452–471 are disordered; it reads SMFNNNRSSSPSEQESNSTY. Low complexity predominate over residues 455–469; that stretch reads NNNRSSSPSEQESNS. Phosphotyrosine; by SRC and autocatalysis is present on Tyr471. Residues 563-848 form the Protein kinase domain; sequence LAFKEKLGEG…PSFQEIHLLL (286 aa). ATP-binding positions include 569–577 and Lys608; that span reads LGEGQFGEV. Asp709 functions as the Proton acceptor in the catalytic mechanism. Phosphotyrosine; by SRC and autocatalysis occurs at positions 735, 739, and 740.

This sequence belongs to the protein kinase superfamily. Tyr protein kinase family. Insulin receptor subfamily. As to quaternary structure, binds hydroxyproline-rich sequence motifs in fibrillar, glycosylated collagen, such as the GQOGVMGFO motif, where O stands for hydroxyproline. Interacts with SRC. Interacts (tyrosine phosphorylated) with SHC1. Post-translationally, N-glycosylated. Tyrosine phosphorylated in response to collagen binding. Phosphorylated by SRC; this is required for activation and subsequent autophosphorylation on additional tyrosine residues. In terms of tissue distribution, widely expressed. Detected in lung, ovary, skin and in testis Leydig cells (at protein level). Widely expressed. Detected at high levels in heart, lung, skeletal muscle, central nervous system (CNS) and kidney, and at lower levels in brain and testis. Detected in chondrocytes in tibia growth plates of young mice.

It is found in the cell membrane. It carries out the reaction L-tyrosyl-[protein] + ATP = O-phospho-L-tyrosyl-[protein] + ADP + H(+). Its activity is regulated as follows. Present in an inactive state in the absence of collagen binding and phosphorylation by SRC. Tyrosine phosphorylation enhances the affinity for ATP and the catalytic activity. In terms of biological role, tyrosine kinase that functions as a cell surface receptor for fibrillar collagen and regulates cell differentiation, remodeling of the extracellular matrix, cell migration and cell proliferation. Required for normal bone development. Regulates osteoblast differentiation and chondrocyte maturation via a signaling pathway that involves MAP kinases and leads to the activation of the transcription factor RUNX2. Regulates remodeling of the extracellular matrix by up-regulation of the collagenases MMP1, MMP2 and MMP13, and thereby facilitates cell migration and tumor cell invasion. Promotes fibroblast migration and proliferation, and thereby contributes to cutaneous wound healing. The polypeptide is Discoidin domain-containing receptor 2 (Ddr2) (Mus musculus (Mouse)).